Consider the following 268-residue polypeptide: Glucosamine-6-phosphate deaminase (268 aa).

D72 serves as the catalytic Proton acceptor; for enolization step. D141 functions as the For ring-opening step in the catalytic mechanism. H143 functions as the Proton acceptor; for ring-opening step in the catalytic mechanism. E148 functions as the For ring-opening step in the catalytic mechanism.

This sequence belongs to the glucosamine/galactosamine-6-phosphate isomerase family. NagB subfamily. In terms of assembly, homohexamer.

The catalysed reaction is alpha-D-glucosamine 6-phosphate + H2O = beta-D-fructose 6-phosphate + NH4(+). Its pathway is amino-sugar metabolism; N-acetylneuraminate degradation; D-fructose 6-phosphate from N-acetylneuraminate: step 5/5. Allosterically activated by N-acetylglucosamine 6-phosphate (GlcNAc6P). Its function is as follows. Catalyzes the reversible isomerization-deamination of glucosamine 6-phosphate (GlcN6P) to form fructose 6-phosphate (Fru6P) and ammonium ion. The protein is Glucosamine-6-phosphate deaminase of Histophilus somni (strain 2336) (Haemophilus somnus).